We begin with the raw amino-acid sequence, 412 residues long: Multifunctional CCA protein (412 aa).

ATP contacts are provided by G8 and R11. Residues G8 and R11 each coordinate CTP. 2 residues coordinate Mg(2+): D21 and D23. ATP is bound by residues R91, R137, and R140. CTP contacts are provided by R91, R137, and R140. In terms of domain architecture, HD spans 228 to 329 (TGIHTMMVLA…LKVFDKADAW (102 aa)).

The protein belongs to the tRNA nucleotidyltransferase/poly(A) polymerase family. Bacterial CCA-adding enzyme type 1 subfamily. As to quaternary structure, monomer. Can also form homodimers and oligomers. It depends on Mg(2+) as a cofactor. Requires Ni(2+) as cofactor.

The enzyme catalyses a tRNA precursor + 2 CTP + ATP = a tRNA with a 3' CCA end + 3 diphosphate. It carries out the reaction a tRNA with a 3' CCA end + 2 CTP + ATP = a tRNA with a 3' CCACCA end + 3 diphosphate. In terms of biological role, catalyzes the addition and repair of the essential 3'-terminal CCA sequence in tRNAs without using a nucleic acid template. Adds these three nucleotides in the order of C, C, and A to the tRNA nucleotide-73, using CTP and ATP as substrates and producing inorganic pyrophosphate. tRNA 3'-terminal CCA addition is required both for tRNA processing and repair. Also involved in tRNA surveillance by mediating tandem CCA addition to generate a CCACCA at the 3' terminus of unstable tRNAs. While stable tRNAs receive only 3'-terminal CCA, unstable tRNAs are marked with CCACCA and rapidly degraded. The sequence is that of Multifunctional CCA protein from Aeromonas hydrophila subsp. hydrophila (strain ATCC 7966 / DSM 30187 / BCRC 13018 / CCUG 14551 / JCM 1027 / KCTC 2358 / NCIMB 9240 / NCTC 8049).